Reading from the N-terminus, the 478-residue chain is Islet cell autoantigen 1 (478 aa).

The AH domain maps to 50–253 (ASDADLDAKL…TSHTMAAIHE (204 aa)). Basic and acidic residues predominate over residues 306–317 (EHKDSSAYKTEE). Disordered stretches follow at residues 306 to 365 (EHKD…SGDK) and 398 to 422 (LKEPAPMGAQGEPDPKPQIGSGFLP).

Predominantly expressed in brain, pancreas and stomach mucosa. High expression also found in stomach muscle and testis.

It localises to the cytoplasm. The protein resides in the cytosol. Its subcellular location is the golgi apparatus membrane. It is found in the cytoplasmic vesicle. The protein localises to the secretory vesicle membrane. It localises to the secretory vesicle. The protein resides in the synaptic vesicle membrane. Functionally, may play a role in neurotransmitter secretion. In Mus musculus (Mouse), this protein is Islet cell autoantigen 1.